Reading from the N-terminus, the 360-residue chain is DNA replication and repair protein RecF (360 aa).

33-40 is an ATP binding site; that stretch reads GENGSGKT.

The protein belongs to the RecF family.

It is found in the cytoplasm. Functionally, the RecF protein is involved in DNA metabolism; it is required for DNA replication and normal SOS inducibility. RecF binds preferentially to single-stranded, linear DNA. It also seems to bind ATP. The protein is DNA replication and repair protein RecF of Rickettsia peacockii (strain Rustic).